The following is a 647-amino-acid chain: UvrABC system protein C (647 aa).

The GIY-YIG domain occupies 16 to 95 (VEPGVYRFRD…IKEFDPRFNV (80 aa)). The UVR domain maps to 208-243 (DRYARELEQQMNAAAENLDFERAARLRDDRSALKRA).

It belongs to the UvrC family. Interacts with UvrB in an incision complex.

Its subcellular location is the cytoplasm. Its function is as follows. The UvrABC repair system catalyzes the recognition and processing of DNA lesions. UvrC both incises the 5' and 3' sides of the lesion. The N-terminal half is responsible for the 3' incision and the C-terminal half is responsible for the 5' incision. This chain is UvrABC system protein C, found in Mycobacterium marinum (strain ATCC BAA-535 / M).